We begin with the raw amino-acid sequence, 52 residues long: Large ribosomal subunit protein eL39 (52 aa).

The protein belongs to the eukaryotic ribosomal protein eL39 family.

The sequence is that of Large ribosomal subunit protein eL39 (RPL39) from Tetrahymena thermophila (strain SB210).